Here is a 63-residue protein sequence, read N- to C-terminus: Large ribosomal subunit protein bL28 (63 aa).

It belongs to the bacterial ribosomal protein bL28 family.

The protein is Large ribosomal subunit protein bL28 of Clostridium botulinum (strain Alaska E43 / Type E3).